Here is a 355-residue protein sequence, read N- to C-terminus: Cyanide hydratase (355 aa).

The CN hydrolase domain maps to 6-285 (YKAAAVTSEP…DGLLFVDIDL (280 aa)). Glu-46 functions as the Proton acceptor in the catalytic mechanism. The active site involves Lys-128. Residue Cys-163 is the Nucleophile of the active site.

It belongs to the carbon-nitrogen hydrolase superfamily. Nitrilase family. In terms of assembly, oligomer of dimers, forming left-handed helical fibers.

It carries out the reaction formamide = hydrogen cyanide + H2O. Functionally, catalyzes the hydration of cyanide to formamide. Degradation of cyanide may be important for plant pathogenic fungi in infection of cyanogenic plants. In Gibberella zeae (strain ATCC MYA-4620 / CBS 123657 / FGSC 9075 / NRRL 31084 / PH-1) (Wheat head blight fungus), this protein is Cyanide hydratase.